A 178-amino-acid polypeptide reads, in one-letter code: ATP synthase subunit delta (178 aa).

Belongs to the ATPase delta chain family. In terms of assembly, F-type ATPases have 2 components, F(1) - the catalytic core - and F(0) - the membrane proton channel. F(1) has five subunits: alpha(3), beta(3), gamma(1), delta(1), epsilon(1). F(0) has three main subunits: a(1), b(2) and c(10-14). The alpha and beta chains form an alternating ring which encloses part of the gamma chain. F(1) is attached to F(0) by a central stalk formed by the gamma and epsilon chains, while a peripheral stalk is formed by the delta and b chains.

The protein localises to the cell membrane. Its function is as follows. F(1)F(0) ATP synthase produces ATP from ADP in the presence of a proton or sodium gradient. F-type ATPases consist of two structural domains, F(1) containing the extramembraneous catalytic core and F(0) containing the membrane proton channel, linked together by a central stalk and a peripheral stalk. During catalysis, ATP synthesis in the catalytic domain of F(1) is coupled via a rotary mechanism of the central stalk subunits to proton translocation. In terms of biological role, this protein is part of the stalk that links CF(0) to CF(1). It either transmits conformational changes from CF(0) to CF(1) or is implicated in proton conduction. The polypeptide is ATP synthase subunit delta (Polynucleobacter asymbioticus (strain DSM 18221 / CIP 109841 / QLW-P1DMWA-1) (Polynucleobacter necessarius subsp. asymbioticus)).